The sequence spans 369 residues: Phosphoribosyl pyrophosphate synthase-associated protein 2 (369 aa).

Methionine 1 carries the N-acetylmethionine modification. A phosphoserine mark is found at serine 219, serine 227, and serine 233.

It belongs to the ribose-phosphate pyrophosphokinase family. As to quaternary structure, binds to PRPS1 and PRPS2.

In terms of biological role, seems to play a negative regulatory role in 5-phosphoribose 1-diphosphate synthesis. In Bos taurus (Bovine), this protein is Phosphoribosyl pyrophosphate synthase-associated protein 2 (PRPSAP2).